Here is a 30-residue protein sequence, read N- to C-terminus: Cycloviolacin-O4 (30 aa).

The segment at residues 1–30 is a cross-link (cyclopeptide (Gly-Asn)); sequence GIPCGESCVWIPCISSAIGCSCKNKVCYRN. 3 disulfide bridges follow: C4–C20, C8–C22, and C13–C27.

In terms of processing, this is a cyclic peptide. Expressed in petals, petioles, roots and runners but not in leaves (at protein level).

Its function is as follows. Probably participates in a plant defense mechanism. The sequence is that of Cycloviolacin-O4 from Viola odorata (Sweet violet).